Here is a 149-residue protein sequence, read N- to C-terminus: Large ribosomal subunit protein bL9 (149 aa).

This sequence belongs to the bacterial ribosomal protein bL9 family.

Binds to the 23S rRNA. The sequence is that of Large ribosomal subunit protein bL9 from Leptospira borgpetersenii serovar Hardjo-bovis (strain JB197).